We begin with the raw amino-acid sequence, 676 residues long: Methionine--tRNA ligase (676 aa).

Positions 15-25 (PYANGSIHLGH) match the 'HIGH' region motif. C146, C149, C159, and C162 together coordinate Zn(2+). The 'KMSKS' region signature appears at 332-336 (KMSKS). K335 is a binding site for ATP. The region spanning 574–676 (DFAKVDMRIA…SGAQPGMQVK (103 aa)) is the tRNA-binding domain.

The protein belongs to the class-I aminoacyl-tRNA synthetase family. MetG type 1 subfamily. In terms of assembly, homodimer. The cofactor is Zn(2+).

Its subcellular location is the cytoplasm. The catalysed reaction is tRNA(Met) + L-methionine + ATP = L-methionyl-tRNA(Met) + AMP + diphosphate. Is required not only for elongation of protein synthesis but also for the initiation of all mRNA translation through initiator tRNA(fMet) aminoacylation. The protein is Methionine--tRNA ligase of Pectobacterium atrosepticum (strain SCRI 1043 / ATCC BAA-672) (Erwinia carotovora subsp. atroseptica).